Reading from the N-terminus, the 312-residue chain is Methionyl-tRNA formyltransferase (312 aa).

Residue Ser109–Pro112 coordinates (6S)-5,6,7,8-tetrahydrofolate.

The protein belongs to the Fmt family.

It carries out the reaction L-methionyl-tRNA(fMet) + (6R)-10-formyltetrahydrofolate = N-formyl-L-methionyl-tRNA(fMet) + (6S)-5,6,7,8-tetrahydrofolate + H(+). Functionally, attaches a formyl group to the free amino group of methionyl-tRNA(fMet). The formyl group appears to play a dual role in the initiator identity of N-formylmethionyl-tRNA by promoting its recognition by IF2 and preventing the misappropriation of this tRNA by the elongation apparatus. The sequence is that of Methionyl-tRNA formyltransferase from Listeria innocua serovar 6a (strain ATCC BAA-680 / CLIP 11262).